Reading from the N-terminus, the 212-residue chain is uncharacterized protein (212 aa).

An N-terminal signal peptide occupies residues 1-18 (MIPLVALLVLLTLQASPG). The chain crosses the membrane as a helical span at residues 186–208 (IYRLATFFMVSLFVGSFVALVFV).

This sequence to A.fulgidus AF_0540.

It is found in the membrane. This is an uncharacterized protein from Archaeoglobus fulgidus (strain ATCC 49558 / DSM 4304 / JCM 9628 / NBRC 100126 / VC-16).